Reading from the N-terminus, the 211-residue chain is LexA repressor (211 aa).

The H-T-H motif DNA-binding region spans 30-50; it reads RVEIAREIGFKSPNAAEEHLK. Residues serine 128 and lysine 165 each act as for autocatalytic cleavage activity in the active site.

Belongs to the peptidase S24 family. Homodimer.

It carries out the reaction Hydrolysis of Ala-|-Gly bond in repressor LexA.. Its function is as follows. Represses a number of genes involved in the response to DNA damage (SOS response), including recA and lexA. In the presence of single-stranded DNA, RecA interacts with LexA causing an autocatalytic cleavage which disrupts the DNA-binding part of LexA, leading to derepression of the SOS regulon and eventually DNA repair. The sequence is that of LexA repressor from Haemophilus ducreyi (strain 35000HP / ATCC 700724).